A 907-amino-acid chain; its full sequence is Protein translocase subunit SecA (907 aa).

ATP contacts are provided by residues Gln87, Gly105–Thr109, and Asp512. The interval Ala862 to Lys885 is disordered. Basic and acidic residues predominate over residues Asp867 to Lys885. Zn(2+) is bound by residues Cys892, Cys894, Cys903, and His904.

The protein belongs to the SecA family. As to quaternary structure, monomer and homodimer. Part of the essential Sec protein translocation apparatus which comprises SecA, SecYEG and auxiliary proteins SecDF-YajC and YidC. Zn(2+) serves as cofactor.

Its subcellular location is the cell inner membrane. It localises to the cytoplasm. It catalyses the reaction ATP + H2O + cellular proteinSide 1 = ADP + phosphate + cellular proteinSide 2.. Functionally, part of the Sec protein translocase complex. Interacts with the SecYEG preprotein conducting channel. Has a central role in coupling the hydrolysis of ATP to the transfer of proteins into and across the cell membrane, serving both as a receptor for the preprotein-SecB complex and as an ATP-driven molecular motor driving the stepwise translocation of polypeptide chains across the membrane. This is Protein translocase subunit SecA from Aliivibrio salmonicida (strain LFI1238) (Vibrio salmonicida (strain LFI1238)).